Consider the following 711-residue polypeptide: Protein Smaug homolog 1 (711 aa).

A Phosphoserine modification is found at serine 168. The disordered stretch occupies residues alanine 278–serine 323. The SAM domain occupies serine 323–glutamate 396. The residue at position 420 (serine 420) is a Phosphoserine. Disordered regions lie at residues serine 422 to alanine 448 and asparagine 565 to asparagine 588. Threonine 424 bears the Phosphothreonine mark. Arginine 566 carries the omega-N-methylarginine modification. The span at phenylalanine 568–glycine 581 shows a compositional bias: polar residues. The residue at position 573 (serine 573) is a Phosphoserine.

It belongs to the SMAUG family. Expressed in brain (at protein level).

The protein resides in the cytoplasm. The protein localises to the cell projection. It is found in the dendrite. It localises to the synapse. Its subcellular location is the synaptosome. In terms of biological role, acts as a translational repressor of SRE-containing messengers. The protein is Protein Smaug homolog 1 (Samd4a) of Mus musculus (Mouse).